Here is a 199-residue protein sequence, read N- to C-terminus: MKAIILAGGHSVRFGKPKAFAEVNGETFYSRVIKTLESTNMFNEIIISTNAQLATQFKYPNVVIDDENHNDKGPLAGIYTIMKQHPEEELFFVVSVDTPMITGKAVSTLYQFLVSHLIENHLDVAAFKEDGRFIPTIAFYSPNALGAITKALHSDNYSFKNVYHELSTDYLDVRDVDAPSYWYKNINYQHDLDALIQKL.

GTP is bound by residues 6-8, Lys18, Asp65, and Asp97; that span reads LAG. A Mg(2+)-binding site is contributed by Asp97.

Belongs to the MobA family. Mg(2+) is required as a cofactor.

It is found in the cytoplasm. It carries out the reaction Mo-molybdopterin + GTP + H(+) = Mo-molybdopterin guanine dinucleotide + diphosphate. In terms of biological role, transfers a GMP moiety from GTP to Mo-molybdopterin (Mo-MPT) cofactor (Moco or molybdenum cofactor) to form Mo-molybdopterin guanine dinucleotide (Mo-MGD) cofactor. This is Probable molybdenum cofactor guanylyltransferase from Staphylococcus aureus (strain COL).